The sequence spans 285 residues: ATP synthase gamma chain (285 aa).

This sequence belongs to the ATPase gamma chain family. F-type ATPases have 2 components, CF(1) - the catalytic core - and CF(0) - the membrane proton channel. CF(1) has five subunits: alpha(3), beta(3), gamma(1), delta(1), epsilon(1). CF(0) has three main subunits: a, b and c.

It is found in the cell membrane. Functionally, produces ATP from ADP in the presence of a proton gradient across the membrane. The gamma chain is believed to be important in regulating ATPase activity and the flow of protons through the CF(0) complex. This Exiguobacterium sp. (strain ATCC BAA-1283 / AT1b) protein is ATP synthase gamma chain.